Here is a 517-residue protein sequence, read N- to C-terminus: Alpha-amylase (517 aa).

The first 21 residues, 1 to 21 (MAHLLLAVVAITLALSQSVFG), serve as a signal peptide directing secretion. C52 and C108 are oxidised to a cystine. Residues N122, R178, and D187 each coordinate Ca(2+). R215 is a binding site for chloride. D217 functions as the Nucleophile in the catalytic mechanism. H221 contributes to the Ca(2+) binding site. E253 functions as the Proton donor in the catalytic mechanism. Residue R355 coordinates chloride. 2 disulfides stabilise this stretch: C397–C403 and C470–C482.

It belongs to the glycosyl hydrolase 13 family. Monomer. Requires Ca(2+) as cofactor. It depends on chloride as a cofactor.

The protein localises to the secreted. The enzyme catalyses Endohydrolysis of (1-&gt;4)-alpha-D-glucosidic linkages in polysaccharides containing three or more (1-&gt;4)-alpha-linked D-glucose units.. Activated by chloride ions. Inhibited by acarbose. Not inhibited by wheat alpha-amylase inhibitors 1 (WI-1, the tetrameric form) or 3 (WI-3, the monomeric form) and bean alpha-amylase inhibitor 1 (alphaAI-1). The protein is Alpha-amylase of Acarus siro (Flour mite).